A 239-amino-acid polypeptide reads, in one-letter code: Small ribosomal subunit protein eS4 (239 aa).

Residues 37 to 99 enclose the S4 RNA-binding domain; the sequence is IPLAVVIRDY…ADLYFRVIPD (63 aa).

The protein belongs to the eukaryotic ribosomal protein eS4 family.

The sequence is that of Small ribosomal subunit protein eS4 from Saccharolobus islandicus (strain Y.N.15.51 / Yellowstone #2) (Sulfolobus islandicus).